Reading from the N-terminus, the 430-residue chain is MESLKSKKLFAEAKKVIPGGVNSPVRACLSVGCDPLFIERAEGSYIYDADGQKYLDFVNSWGPMIMGHAHPDIIKAIQDAAVYGTSYGAPTSSEVDLASMVVEAVPSIEKVRFVSSGTEATMSAVRLARGYTGKNVIVKFDGCYHGHADSFLVKAGSGVLTLGIPGSPGVPEDIVKNTISIPYNSVEALETTLRDADLNIACVIVEPVAGNMGCVPPAPGFLQKLREITAEEGIVLIFDEVITGFRLSYGGAQQYYGVTPDLTCLGKIIGGGLPVGAYGGKADIMNSVAPDGPVYQAGTLSGNPLAMAAGKAALKLLQQDGFYEDLNQKSAAYADGLLEVAGRVGLPMQLNRVGSVMTSFFTATPVTDFETAMKADTGLYGRHYRQMLDSGIYLAPSQFECSFMSSTHSDADLKRALLETEKSFSLLKNA.

The residue at position 267 (K267) is an N6-(pyridoxal phosphate)lysine.

Belongs to the class-III pyridoxal-phosphate-dependent aminotransferase family. HemL subfamily. Homodimer. Requires pyridoxal 5'-phosphate as cofactor.

The protein localises to the cytoplasm. It carries out the reaction (S)-4-amino-5-oxopentanoate = 5-aminolevulinate. Its pathway is porphyrin-containing compound metabolism; protoporphyrin-IX biosynthesis; 5-aminolevulinate from L-glutamyl-tRNA(Glu): step 2/2. This is Glutamate-1-semialdehyde 2,1-aminomutase from Desulfotalea psychrophila (strain LSv54 / DSM 12343).